The chain runs to 148 residues: UPF0756 membrane protein YeaL (148 aa).

4 consecutive transmembrane segments (helical) span residues 14 to 34 (ALGFISHNTTVAVSILVLIIV), 51 to 71 (LTVGIIILTIGVMAPIASGTL), 86 to 106 (LVAIAVGVFVSWLGGRGVALM), and 121 to 141 (VLGVALFRGVPVGPLIAAGLV).

Belongs to the UPF0756 family.

The protein localises to the cell membrane. This Salmonella arizonae (strain ATCC BAA-731 / CDC346-86 / RSK2980) protein is UPF0756 membrane protein YeaL.